Consider the following 522-residue polypeptide: Cell polarity protein mod5 (522 aa).

Disordered stretches follow at residues 1 to 83 (MSAL…PDGD), 119 to 158 (KRSASKSPKRSANGSTSEDISIEGSPSETAKGARSSFNSN), 170 to 192 (RRILEASQDSSRPGRYSYRTKSA), 251 to 285 (PLQPYSPPANETPASSSSSAKARPVSVPDMSSPVP), and 300 to 516 (YSPS…KLEK). 3 stretches are compositionally biased toward polar residues: residues 27-46 (PNTTVGFQFDNRNVGTSAPS), 66-76 (LPSSKQDTGSS), and 131-146 (NGSTSEDISIEGSPSE). Residue S43 is modified to Phosphoserine. The segment covering 258–285 (PANETPASSSSSAKARPVSVPDMSSPVP) has biased composition (low complexity). S303 is modified (phosphoserine). Residues 308–318 (KVAETDSESRK) are compositionally biased toward basic and acidic residues. Residues 335-349 (GAQTQSTPNRISRSD) show a composition bias toward polar residues. S350 carries the phosphoserine modification. 2 stretches are compositionally biased toward polar residues: residues 363 to 396 (NASTASSEAISQSMRSFQPQPNTGSPFPRFTSTN) and 404 to 431 (DIPQSDANDSTVNLNQPNYANLTPTPQV). Residues 439-452 (SRSSPLPSASVPAL) show a composition bias toward low complexity. 2 stretches are compositionally biased toward basic and acidic residues: residues 472 to 482 (HESEMPPHVTR) and 495 to 516 (PKEKPSEKSEKPPKKKGSKLEK).

Interacts with tea1 and tea3.

It is found in the cell membrane. Its function is as follows. With tea1, acts in a positive-feedback loop in the microtubule-mediated regulation of cell polarity. Involved in the anchoring of tea1 at the cortex as well as the correct localization of tea3. This Schizosaccharomyces pombe (strain 972 / ATCC 24843) (Fission yeast) protein is Cell polarity protein mod5 (mod5).